Consider the following 482-residue polypeptide: MAKPTVVVLPVWGAGHFMPMIEAGKRLLRGSGGALSVTVLLMPAPTPDAAVDIAAQVKREEASGADDISFRHLPAVDMPTGHTGVEEWISRILRSHAPNVWAAIAGLDCPVAALVTDIFCTPALEVSRELGVPGYVYFPCSASMLALLLRSPGLDEEVAVEFEEMDGAIRIPGLPPVPPSALPSTMLDRKKSTYDWFVATGRGYMNATGVIVNTAAELEQSVLAAIADGRCTRGVPAPTVYPIGPVLSFPPPPEEQPHECVRWLDAQPPASVLFLCFGSKGLLPPPKVREIAAALERSGGHRFLWVLRGPPKDSRQGQRVPTDAMLDELLPEGFLERTKGRGLVWPTRAPQKEILAHAAVGGFVTHCGWNSILESLWFGVPVLPWPLDAEQHFNAFTLVAHLGVAVPLGMDRRRDNFVEAAELERAVRSLMDDASDEGRKARAKAAETRAVCRKAVEEGGSSSTAFQRLTDDIVRRGAVQIR.

Catalysis depends on His16, which acts as the Proton acceptor. Asp117 functions as the Charge relay in the catalytic mechanism. The UDP site is built by Ser279, Trp345, Ala349, His366, Asn370, Ser371, and Glu374.

The protein belongs to the UDP-glycosyltransferase family. As to expression, highly expressed in leaves, sheaths, pistils and embryos, observed in stems, stem nodes and panicles, and present at low levels in roots.

It is found in the endoplasmic reticulum. It localises to the nucleus. It catalyses the reaction malvidin + UDP-alpha-D-galactose = malvidin 3-O-beta-D-galactoside + UDP + H(+). It participates in pigment biosynthesis; anthocyanin biosynthesis. UDP-glycosyltransferase which uses UDP-galactose and malvidin as substrates to catalyze the biosynthesis of malvidin 3-O-galactoside, an anthocyanin conferring purple pigmentation. This is Malvidin galactosylase UGT88C3 from Oryza sativa subsp. japonica (Rice).